The chain runs to 318 residues: Porphobilinogen deaminase (318 aa).

An S-(dipyrrolylmethanemethyl)cysteine modification is found at cysteine 241.

This sequence belongs to the HMBS family. Monomer. Dipyrromethane serves as cofactor.

It carries out the reaction 4 porphobilinogen + H2O = hydroxymethylbilane + 4 NH4(+). Its pathway is porphyrin-containing compound metabolism; protoporphyrin-IX biosynthesis; coproporphyrinogen-III from 5-aminolevulinate: step 2/4. Functionally, tetrapolymerization of the monopyrrole PBG into the hydroxymethylbilane pre-uroporphyrinogen in several discrete steps. This is Porphobilinogen deaminase from Geotalea uraniireducens (strain Rf4) (Geobacter uraniireducens).